A 158-amino-acid chain; its full sequence is Small ribosomal subunit protein bS6 (158 aa).

The tract at residues 98 to 158 (EAPSAPLARR…DRDEDQNEEN (61 aa)) is disordered. Basic and acidic residues-rich tracts occupy residues 106-117 (RRGEDRDRDRGF) and 127-150 (DSGR…RSDR).

It belongs to the bacterial ribosomal protein bS6 family.

Its function is as follows. Binds together with bS18 to 16S ribosomal RNA. This chain is Small ribosomal subunit protein bS6, found in Acidiphilium cryptum (strain JF-5).